We begin with the raw amino-acid sequence, 77 residues long: Large ribosomal subunit protein eL20 (77 aa).

The protein belongs to the eukaryotic ribosomal protein eL20 family. Part of the 50S ribosomal subunit. Binds 23S rRNA.

The polypeptide is Large ribosomal subunit protein eL20 (Pyrococcus furiosus (strain ATCC 43587 / DSM 3638 / JCM 8422 / Vc1)).